The primary structure comprises 462 residues: Glutamate--tRNA ligase 2 (462 aa).

The short motif at Pro8–Gly18 is the 'HIGH' region element. The short motif at Pro227–Arg231 is the 'KMSKS' region element. Lys230 provides a ligand contact to ATP.

It belongs to the class-I aminoacyl-tRNA synthetase family. Glutamate--tRNA ligase type 1 subfamily. As to quaternary structure, monomer.

The protein resides in the cytoplasm. It carries out the reaction tRNA(Glu) + L-glutamate + ATP = L-glutamyl-tRNA(Glu) + AMP + diphosphate. Its function is as follows. Catalyzes the attachment of glutamate to tRNA(Glu) in a two-step reaction: glutamate is first activated by ATP to form Glu-AMP and then transferred to the acceptor end of tRNA(Glu). This Thermosipho melanesiensis (strain DSM 12029 / CIP 104789 / BI429) protein is Glutamate--tRNA ligase 2.